The chain runs to 498 residues: Trichoplein keratin filament-binding protein (498 aa).

Residues 11 to 39 (CSQQRLNQQLARQREQEARLRQQWEQNSR) are a coiled coil. Residues Lys50 and Lys57 each participate in a glycyl lysine isopeptide (Lys-Gly) (interchain with G-Cter in ubiquitin) cross-link. Coiled coils occupy residues 66-136 (AYQR…LIAE), 163-353 (VNSW…LREE), and 380-479 (LTGR…EAET). The interval 73 to 498 (KEEKRRSLEA…PYGHPKIAWN (426 aa)) is interaction with keratin proteins. The disordered stretch occupies residues 167-189 (EMQKEEKKQQEATAEQENKRYEN). Residues 168 to 189 (MQKEEKKQQEATAEQENKRYEN) are compositionally biased toward basic and acidic residues. The tract at residues 259–425 (KQMEAFRQKA…RELARREKEE (167 aa)) is trichohyalin/plectin homology domain. Positions 447-498 (QAWEADQQEEEEEEEARRVEQLSDALLQQEAETMAEQGYRPKPYGHPKIAWN) are disordered.

This sequence belongs to the TCHP family. As to quaternary structure, interacts specifically with keratin proteins including, KRT5, KRT6A, KRT8, KRT14, KRT16 and KRT18. Interacts with KCTD17. Ubiquitinated. Ubiquitination by the BCR(KCTD17) E3 ubiquitin ligase complex results in proteasomal degradation, and induces ciliogenesis. As to expression, expressed at high levels in normal urothelial and breast epithelial cells. Also expressed in the smooth muscle and endothelial cells. Reduced expression seen in advanced bladder and breast carcinomas (at protein level). Ubiquitous. Expressed at highest levels in the heart, skeletal muscle, kidney, liver and testis.

Its subcellular location is the cytoplasm. It is found in the cytoskeleton. The protein localises to the cell membrane. It localises to the mitochondrion. The protein resides in the cell junction. Its subcellular location is the desmosome. It is found in the microtubule organizing center. The protein localises to the centrosome. Functionally, tumor suppressor which has the ability to inhibit cell growth and be pro-apoptotic during cell stress. Inhibits cell growth in bladder and prostate cancer cells by a down-regulation of HSPB1 by inhibiting its phosphorylation. May act as a 'capping' or 'branching' protein for keratin filaments in the cell periphery. May regulate K8/K18 filament and desmosome organization mainly at the apical or peripheral regions of simple epithelial cells. Is a negative regulator of ciliogenesis. This chain is Trichoplein keratin filament-binding protein, found in Homo sapiens (Human).